We begin with the raw amino-acid sequence, 780 residues long: MTESASSTSGQEFDVFSVMDWKDGVGTLPGSDLKFRVNEFGALEVITDENEMENVKKATATTTWMVPTAQEAPTSPPSSRPVFPPAYWTSPPGCPTVFSEKTGMPFRLKDPVKVEGLQFCENCCQYGNVDECLSGGNYCSQNCARHIKDKDQKEERDVEEDNEEEDPKCSRKKKPKLSLKADTKEDGEERDDEMENKQDVRILRGSQRARRKRRGDSAVLKQGLPPKGKKAWCWASYLEEEKAVAVPAKLFKEHQSFPYNKNGFKVGMKLEGVDPEHQSVYCVLTVAEVCGYRIKLHFDGYSDCYDFWVNADALDIHPVGWCEKTGHKLHPPKGYKEEEFNWQTYLKTCKAQAAPKSLFENQNITVIPSGFRVGMKLEAVDKKNPSFICVATVTDMVDNRFLVHFDNWDESYDYWCEASSPHIHPVGWCKEHRRTLITPPGYPNVKHFSWDKYLEETNSLPAPARAFKVKPPHGFQKKMKLEVVDKRNPMFIRVATVADTDDHRVKVHFDGWNNCYDYWIDADSPDIHPVGWCSKTGHPLQPPLSPLELMEASEHGGCSTPGCKGIGHFKRARHLGPHSAANCPYSEINLNKDRIFPDRLSGEMPPASPSFPRNKRTDANESSSSPEIRDQHADDVKEDFEERTESEMRTSHEARGAREEPTVQQAQRRSAVFLSFKSPIPCLPLRWEQQSKLLPTVAGIPASKVSKWSTDEVSEFIQSLPGCEEHGKVFKDEQIDGEAFLLMTQTDIVKIMSIKLGPALKIFNSILMFKAAEKNSHNEL.

The interval 1–64 (MTESASSTSG…VKKATATTTW (64 aa)) is interaction with RBPJ. Required for transcription repressor activity on Notch target genes. The tract at residues 149–220 (DKDQKEERDV…RKRRGDSAVL (72 aa)) is disordered. 2 stretches are compositionally biased toward acidic residues: residues 157–166 (DVEEDNEEED) and 185–194 (EDGEERDDEM). MBT repeat units follow at residues 232 to 332 (WCWA…LHPP), 340 to 439 (FNWQ…LITP), and 448 to 543 (FSWD…LQPP). The segment at 549–593 (LMEASEHGGCSTPGCKGIGHFKRARHLGPHSAANCPYSEINLNKD) adopts a CCHHC-type; degenerate zinc-finger fold. Positions 597-665 (PDRLSGEMPP…GAREEPTVQQ (69 aa)) are disordered. Residues 600–710 (LSGEMPPASP…PASKVSKWST (111 aa)) form an interaction with DCAF5 region. Ser-608 carries the post-translational modification Phosphoserine. Lys-637 participates in a covalent cross-link: Glycyl lysine isopeptide (Lys-Gly) (interchain with G-Cter in SUMO2). Positions 643 to 661 (RTESEMRTSHEARGAREEP) are enriched in basic and acidic residues. Lys-704 is covalently cross-linked (Glycyl lysine isopeptide (Lys-Gly) (interchain with G-Cter in SUMO2)). The region spanning 708–772 (WSTDEVSEFI…FNSILMFKAA (65 aa)) is the SAM domain.

As to quaternary structure, interacts with RNF2. Interacts (via SAM domain) with SAMD1 (via SAM domain); the interaction mediates L3MBTL3 binding to chromatin. Interacts with RBPJ; the interaction is required for L3MBTL3 localization to chromatin and is impaired by Notch-derived peptides containing the intracellular domain (NICD). Interacts (via SAM domain) with KDM1A. Interacts with DCAF5. Interacts with DNMT1. Interacts with E2F1. Interacts with SOX2. Interacts with SFMBT1.

The protein localises to the nucleus. Functionally, is a negative regulator of Notch target genes expression, required for RBPJ-mediated transcriptional repression. It recruits KDM1A to Notch-responsive elements and promotes KDM1A-mediated H3K4me demethylation. Involved in the regulation of ubiquitin-dependent degradation of a set of methylated non-histone proteins, including SOX2, DNMT1 and E2F1. It acts as an adapter recruiting the CRL4-DCAF5 E3 ubiquitin ligase complex to methylated target proteins. Required for normal maturation of myeloid progenitor cells. The sequence is that of Lethal(3)malignant brain tumor-like protein 3 from Homo sapiens (Human).